We begin with the raw amino-acid sequence, 630 residues long: tRNA uridine 5-carboxymethylaminomethyl modification enzyme MnmG (630 aa).

FAD contacts are provided by residues G14–G19, V126, and S181. An NAD(+)-binding site is contributed by G273 to F287. Residue Q370 participates in FAD binding.

This sequence belongs to the MnmG family. Homodimer. Heterotetramer of two MnmE and two MnmG subunits. FAD is required as a cofactor.

The protein localises to the cytoplasm. Its function is as follows. NAD-binding protein involved in the addition of a carboxymethylaminomethyl (cmnm) group at the wobble position (U34) of certain tRNAs, forming tRNA-cmnm(5)s(2)U34. In Alkaliphilus metalliredigens (strain QYMF), this protein is tRNA uridine 5-carboxymethylaminomethyl modification enzyme MnmG.